A 140-amino-acid chain; its full sequence is Prepilin peptidase-dependent protein A (140 aa).

Residues 1 to 23 constitute a propeptide that is removed on maturation; it reads MLLLKASAICGKGNEGKRNKKGG. Position 24 is an N-methylphenylalanine (phenylalanine 24). The chain crosses the membrane as a helical span at residues 24–44; the sequence is FTLIELTVVLAIMAIILMVIA.

The protein localises to the membrane. Not yet known. The sequence is that of Prepilin peptidase-dependent protein A (ppdA) from Clostridium perfringens (strain 13 / Type A).